A 101-amino-acid chain; its full sequence is MAKKSSVEKNNRRKRMAKNAAPKRARLKAIIADKTKPMEERFAATLKLAEMPRNSSATRIRNRCELTGRPRSNYRKNKLSRIALRELGSKGLVPGLVKSSW.

A compositionally biased stretch (basic and acidic residues) spans 1–10 (MAKKSSVEKN). The tract at residues 1–23 (MAKKSSVEKNNRRKRMAKNAAPK) is disordered. Residues 11–23 (NRRKRMAKNAAPK) are compositionally biased toward basic residues.

The protein belongs to the universal ribosomal protein uS14 family. As to quaternary structure, part of the 30S ribosomal subunit. Contacts proteins S3 and S10.

Functionally, binds 16S rRNA, required for the assembly of 30S particles and may also be responsible for determining the conformation of the 16S rRNA at the A site. In Bradyrhizobium sp. (strain BTAi1 / ATCC BAA-1182), this protein is Small ribosomal subunit protein uS14.